Consider the following 288-residue polypeptide: N(1)-aminopropylagmatine ureohydrolase (288 aa).

His114, Asp133, His135, Asp137, Asp213, and Asp215 together coordinate Mn(2+).

The protein belongs to the arginase family. The cofactor is Mn(2+).

It is found in the cytoplasm. It carries out the reaction N(1)-(3-aminopropyl)agmatine + H2O = urea + spermidine. The catalysed reaction is agmatine + H2O = urea + putrescine. Its pathway is amine and polyamine biosynthesis; spermidine biosynthesis. In terms of biological role, involved in the biosynthesis of polyamines which are thought to support the growth of thermophilic microorganisms under high-temperature conditions. It seems that long-chain and branched-chain of polyamines effectively stabilize DNA and RNA, respectively. Catalyzes the decarboxylation of N1-(3-aminopropyl)agmatine to yield spermidine and urea. It can also use agmatine to yield putrescine. The chain is N(1)-aminopropylagmatine ureohydrolase from Thermococcus kodakarensis (strain ATCC BAA-918 / JCM 12380 / KOD1) (Pyrococcus kodakaraensis (strain KOD1)).